The chain runs to 324 residues: Ig gamma-1 chain C region secreted form (324 aa).

Positions 1 to 97 (AKTTPPSVYP…ASSTKVDKKI (97 aa)) are CH1. Cys27 and Cys82 are joined by a disulfide. The hinge stretch occupies residues 98 to 110 (VPRDCGCKPCICT). Residues 111–217 (VPEVSSVFIF…PIEKTISKTK (107 aa)) form a CH2 region. 2 cysteine pairs are disulfide-bonded: Cys138–Cys198 and Cys244–Cys302. The N-linked (GlcNAc...) asparagine glycan is linked to Asn174. A CH3 region spans residues 218-324 (GRPKAPQVYT…EKSLSHSPGK (107 aa)).

The protein resides in the secreted. This is Ig gamma-1 chain C region secreted form (Ighg1) from Mus musculus (Mouse).